Reading from the N-terminus, the 226-residue chain is uncharacterized protein (226 aa).

Disordered regions lie at residues 1–20 (MGAE…AVQT) and 205–226 (LDRK…QRDA).

This is an uncharacterized protein from Treponema pallidum (strain Nichols).